The primary structure comprises 451 residues: Methylenetetrahydrofolate--tRNA-(uracil-5-)-methyltransferase TrmFO (451 aa).

18 to 23 (GGGLAG) serves as a coordination point for FAD.

Belongs to the MnmG family. TrmFO subfamily. The cofactor is FAD.

It localises to the cytoplasm. It catalyses the reaction uridine(54) in tRNA + (6R)-5,10-methylene-5,6,7,8-tetrahydrofolate + NADH + H(+) = 5-methyluridine(54) in tRNA + (6S)-5,6,7,8-tetrahydrofolate + NAD(+). The enzyme catalyses uridine(54) in tRNA + (6R)-5,10-methylene-5,6,7,8-tetrahydrofolate + NADPH + H(+) = 5-methyluridine(54) in tRNA + (6S)-5,6,7,8-tetrahydrofolate + NADP(+). Catalyzes the folate-dependent formation of 5-methyl-uridine at position 54 (M-5-U54) in all tRNAs. The polypeptide is Methylenetetrahydrofolate--tRNA-(uracil-5-)-methyltransferase TrmFO (Synechococcus sp. (strain JA-3-3Ab) (Cyanobacteria bacterium Yellowstone A-Prime)).